A 233-amino-acid chain; its full sequence is MADS-box transcription factor 56 (233 aa).

In terms of domain architecture, MADS-box spans 1 to 61; the sequence is MVRGRTELKR…GRLYEFASAP (61 aa). The K-box domain maps to 87-177; sequence IQQVKDDTLG…RGKHRNLEAA (91 aa).

The protein localises to the nucleus. Probable transcription factor. The sequence is that of MADS-box transcription factor 56 (MADS56) from Oryza sativa subsp. indica (Rice).